The chain runs to 269 residues: Small ribosomal subunit protein uS2 (269 aa).

Residues 235–269 (FDAKNPLKPQNYNTLNKRPYQDSPRKPSYQNQNQR) form a disordered region.

It belongs to the universal ribosomal protein uS2 family.

In Aster yellows witches'-broom phytoplasma (strain AYWB), this protein is Small ribosomal subunit protein uS2.